The chain runs to 43 residues: Bacteriocin mundticin (43 aa).

An intrachain disulfide couples C9 to C14.

Functionally, this bacteriocin inhibits the growth of several Gram-positive bacteria, especially pathogenic L.monocytogenes and C.botulinum but has no effect on the growth of a number of yeasts and Gram-negative bacteria. The sequence is that of Bacteriocin mundticin from Enterococcus mundtii.